Here is a 315-residue protein sequence, read N- to C-terminus: Peroxidase 4 (315 aa).

Positions 1-19 (MAIFKILVLLLSLCCFSQA) are cleaved as a signal peptide. Pyrrolidone carboxylic acid is present on Gln20. 4 disulfides stabilise this stretch: Cys30/Cys110, Cys63/Cys68, Cys116/Cys311, and Cys195/Cys221. The active-site Proton acceptor is His61. Positions 62, 65, 67, 69, and 71 each coordinate Ca(2+). Pro158 contacts substrate. His188 lines the heme b pocket. Residue Thr189 coordinates Ca(2+). An N-linked (GlcNAc...) asparagine glycan is attached at Asn205. Ca(2+) contacts are provided by Asp234, Thr237, and Asp242.

It belongs to the peroxidase family. Classical plant (class III) peroxidase subfamily. The cofactor is heme b. Ca(2+) is required as a cofactor.

Its subcellular location is the secreted. The enzyme catalyses 2 a phenolic donor + H2O2 = 2 a phenolic radical donor + 2 H2O. Its function is as follows. Removal of H(2)O(2), oxidation of toxic reductants, biosynthesis and degradation of lignin, suberization, auxin catabolism, response to environmental stresses such as wounding, pathogen attack and oxidative stress. These functions might be dependent on each isozyme/isoform in each plant tissue. This is Peroxidase 4 (PER4) from Arabidopsis thaliana (Mouse-ear cress).